Reading from the N-terminus, the 315-residue chain is Methionyl-tRNA formyltransferase (315 aa).

113 to 116 serves as a coordination point for (6S)-5,6,7,8-tetrahydrofolate; that stretch reads SLLP.

It belongs to the Fmt family.

The enzyme catalyses L-methionyl-tRNA(fMet) + (6R)-10-formyltetrahydrofolate = N-formyl-L-methionyl-tRNA(fMet) + (6S)-5,6,7,8-tetrahydrofolate + H(+). In terms of biological role, attaches a formyl group to the free amino group of methionyl-tRNA(fMet). The formyl group appears to play a dual role in the initiator identity of N-formylmethionyl-tRNA by promoting its recognition by IF2 and preventing the misappropriation of this tRNA by the elongation apparatus. In Shigella sonnei (strain Ss046), this protein is Methionyl-tRNA formyltransferase.